The following is a 572-amino-acid chain: Sulfate adenylyltransferase (572 aa).

Residues 1–169 (MANAPHGGVL…IEAVNKLNHY (169 aa)) form an N-terminal region. The interval 170–393 (DYVALRYTPA…LRESNPPRAT (224 aa)) is catalytic. Residue Gln-197 participates in sulfate binding. ATP-binding positions include 197–200 (QTRN) and 291–294 (GRDH). Residues Thr-198, Arg-199, and Asn-200 contribute to the active site. Position 199 (Arg-199) interacts with sulfate. Ala-295 contributes to the sulfate binding site. Val-333 serves as a coordination point for ATP. Residues 394–572 (QGFTIFLTGY…LESQGFLERQ (179 aa)) are allosteric regulation domain; adenylyl-sulfate kinase-like. 3'-phosphoadenylyl sulfate-binding positions include 433 to 436 (DTVR), Arg-450, 476 to 477 (IA), and Arg-514.

This sequence in the N-terminal section; belongs to the sulfate adenylyltransferase family. In the C-terminal section; belongs to the APS kinase family. In terms of assembly, homohexamer. Dimer of trimers.

The protein localises to the cytoplasm. It carries out the reaction sulfate + ATP + H(+) = adenosine 5'-phosphosulfate + diphosphate. It participates in sulfur metabolism; hydrogen sulfide biosynthesis; sulfite from sulfate: step 1/3. With respect to regulation, allosterically inhibited by 3'-phosphoadenosine 5'-phosphosulfate (PAPS). Its function is as follows. Catalyzes the first intracellular reaction of sulfate assimilation, forming adenosine-5'-phosphosulfate (APS) from inorganic sulfate and ATP. Plays an important role in sulfate activation as a component of the biosynthesis pathway of sulfur-containing amino acids. The protein is Sulfate adenylyltransferase of Penicillium chrysogenum (Penicillium notatum).